The chain runs to 244 residues: 5-oxoprolinase subunit A (244 aa).

The protein belongs to the LamB/PxpA family. In terms of assembly, forms a complex composed of PxpA, PxpB and PxpC.

The enzyme catalyses 5-oxo-L-proline + ATP + 2 H2O = L-glutamate + ADP + phosphate + H(+). Catalyzes the cleavage of 5-oxoproline to form L-glutamate coupled to the hydrolysis of ATP to ADP and inorganic phosphate. The sequence is that of 5-oxoprolinase subunit A from Escherichia coli O17:K52:H18 (strain UMN026 / ExPEC).